We begin with the raw amino-acid sequence, 134 residues long: Phosphoribosyl-AMP cyclohydrolase (134 aa).

A Mg(2+)-binding site is contributed by aspartate 90. Zn(2+) is bound at residue cysteine 91. Mg(2+) contacts are provided by aspartate 92 and aspartate 94. Zn(2+)-binding residues include cysteine 107 and cysteine 114.

It belongs to the PRA-CH family. In terms of assembly, homodimer. The cofactor is Mg(2+). Requires Zn(2+) as cofactor.

It localises to the cytoplasm. It catalyses the reaction 1-(5-phospho-beta-D-ribosyl)-5'-AMP + H2O = 1-(5-phospho-beta-D-ribosyl)-5-[(5-phospho-beta-D-ribosylamino)methylideneamino]imidazole-4-carboxamide. It participates in amino-acid biosynthesis; L-histidine biosynthesis; L-histidine from 5-phospho-alpha-D-ribose 1-diphosphate: step 3/9. Its function is as follows. Catalyzes the hydrolysis of the adenine ring of phosphoribosyl-AMP. The polypeptide is Phosphoribosyl-AMP cyclohydrolase (Arthrobacter sp. (strain FB24)).